A 468-amino-acid polypeptide reads, in one-letter code: uncharacterized protein (468 aa).

Residues methionine 1–asparagine 22 are disordered. The RING-type zinc finger occupies cysteine 85–arginine 123. Residues aspartate 386–histidine 402 show a composition bias toward low complexity. The tract at residues aspartate 386–serine 468 is disordered. Positions isoleucine 417–arginine 434 are enriched in polar residues.

Its subcellular location is the nucleus. This is an uncharacterized protein from Schizosaccharomyces pombe (strain 972 / ATCC 24843) (Fission yeast).